The following is a 232-amino-acid chain: Phosphatidylserine decarboxylase proenzyme (232 aa).

Serine 190 acts as the Schiff-base intermediate with substrate; via pyruvic acid in catalysis. Serine 190 bears the Pyruvic acid (Ser); by autocatalysis mark.

The protein belongs to the phosphatidylserine decarboxylase family. PSD-A subfamily. As to quaternary structure, heterodimer of a large membrane-associated beta subunit and a small pyruvoyl-containing alpha subunit. Pyruvate serves as cofactor. Post-translationally, is synthesized initially as an inactive proenzyme. Formation of the active enzyme involves a self-maturation process in which the active site pyruvoyl group is generated from an internal serine residue via an autocatalytic post-translational modification. Two non-identical subunits are generated from the proenzyme in this reaction, and the pyruvate is formed at the N-terminus of the alpha chain, which is derived from the carboxyl end of the proenzyme. The post-translation cleavage follows an unusual pathway, termed non-hydrolytic serinolysis, in which the side chain hydroxyl group of the serine supplies its oxygen atom to form the C-terminus of the beta chain, while the remainder of the serine residue undergoes an oxidative deamination to produce ammonia and the pyruvoyl prosthetic group on the alpha chain.

Its subcellular location is the cell membrane. It carries out the reaction a 1,2-diacyl-sn-glycero-3-phospho-L-serine + H(+) = a 1,2-diacyl-sn-glycero-3-phosphoethanolamine + CO2. It participates in phospholipid metabolism; phosphatidylethanolamine biosynthesis; phosphatidylethanolamine from CDP-diacylglycerol: step 2/2. In terms of biological role, catalyzes the formation of phosphatidylethanolamine (PtdEtn) from phosphatidylserine (PtdSer). In Brucella anthropi (strain ATCC 49188 / DSM 6882 / CCUG 24695 / JCM 21032 / LMG 3331 / NBRC 15819 / NCTC 12168 / Alc 37) (Ochrobactrum anthropi), this protein is Phosphatidylserine decarboxylase proenzyme.